The chain runs to 380 residues: MIQAQTLQHFGNGAREGDQSYFDPGAPPPFKIADIRAAIPKHCWEKSTLRSLSYVLRDVLVVTALAASAISFNSWFFWPLYWPAQGTMFWALFVLGHDCGHGSFSNSSKLNSFVGHILHSLILVPYNGWRISHRTHHQNHGHVEKDESWVPLTEKVYKNLDDMTRMLRYSFPFPIFAYPFYLWNRSPGKEGSHFNPYSNLFSPGERKGVVTSTLCWGIVLSVLLYLSLTIGPIFMLKLYGVPYLIFVMWLDFVTYLHHHGYTHKLPWYRGQEWSYLRGGLTTVDRDYGWINNVHHDIGTHVIHHLFPQIPHYHLVEATKSAKSVLGKYYREPQKSGPLPFHLLKYLLQSISQDHFVSDTGDIVYYQTDPKLHQDSWTKSK.

Residues 59 to 78 traverse the membrane as a helical segment; the sequence is VLVVTALAASAISFNSWFFW. The short motif at 97–101 is the Histidine box-1 element; that stretch reads HDCGH. Residues 133 to 137 carry the Histidine box-2 motif; it reads HRTHH. 2 consecutive transmembrane segments (helical) span residues 208–231 and 238–256; these read GVVTSTLCWGIVLSVLLYLSLTIG and LYGVPYLIFVMWLDFVTYL. Residues 300 to 304 carry the Histidine box-3 motif; sequence HVIHH.

The protein belongs to the fatty acid desaturase type 1 family.

It localises to the endoplasmic reticulum membrane. It functions in the pathway lipid metabolism; polyunsaturated fatty acid biosynthesis. Its function is as follows. Microsomal (ER) omega-3 fatty acid desaturase introduces the third double bond in the biosynthesis of 18:3 fatty acids, important constituents of plant membranes. It is thought to use cytochrome b5 as an electron donor and to act on fatty acids esterified to phosphatidylcholine and, possibly, other phospholipids. In Vigna radiata var. radiata (Mung bean), this protein is Omega-3 fatty acid desaturase, endoplasmic reticulum (ARG1).